We begin with the raw amino-acid sequence, 183 residues long: Type II secretion system protein H (183 aa).

A propeptide spans 1 to 8 (MRRHRQSG) (leader sequence). Phenylalanine 9 carries the N-methylphenylalanine modification. Residues 9 to 28 (FTLLEVLLVAMLMGLVATAV) form a helical membrane-spanning segment.

Belongs to the GSP H family. Type II secretion is composed of four main components: the outer membrane complex, the inner membrane complex, the cytoplasmic secretion ATPase and the periplasm-spanning pseudopilus. Interacts with core component ExeG. Post-translationally, cleaved by prepilin peptidase. Methylated by prepilin peptidase at the amino group of the N-terminal phenylalanine once the leader sequence is cleaved by prepilin peptidase.

The protein localises to the cell inner membrane. Component of the type II secretion system required for the energy-dependent secretion of extracellular factors such as proteases and toxins from the periplasm. Part of the pseudopilus tip complex that is critical for the recognition and binding of secretion substrates. The protein is Type II secretion system protein H (exeH) of Aeromonas hydrophila.